The following is a 259-amino-acid chain: Complement factor D (259 aa).

An N-terminal signal peptide occupies residues 1–21; that stretch reads MADRSGHLAALILLGAAVCVA. Residues 22 to 26 constitute a propeptide, activation peptide; sequence QPRGR. The Peptidase S1 domain maps to 27 to 254; that stretch reads ILGGQEAKSH…YVAWIDGVMA (228 aa). Residues C52 and C68 are joined by a disulfide bond. Catalysis depends on charge relay system residues H67 and D115. Disulfide bonds link C149–C215, C180–C196, and C205–C230. S209 (charge relay system) is an active-site residue. The tract at residues 224–228 is self-inhibitor loop; the sequence is TSGSR.

The protein belongs to the peptidase S1 family. In terms of processing, CFD is activated by the removal of 5 residues at the N-terminus, named activation peptide, by the MASP-3 isoform of MASP1.

It is found in the secreted. It carries out the reaction Selective cleavage of Arg-|-Lys bond in complement factor B when in complex with complement subcomponent C3b or with cobra venom factor.. Its activity is regulated as follows. Circulates in plasma in a mature but self-inhibited form. Activated by factor B (CFB), which displaces the self-inhibition loop. Associates with CFB complexed with complement C3b. In terms of biological role, serine protease that initiates the alternative pathway of the complement system, a cascade of proteins that leads to phagocytosis and breakdown of pathogens and signaling that strengthens the adaptive immune system. In contrast to other complement pathways (classical, lectin and GZMK) that are directly activated by pathogens or antigen-antibody complexes, the alternative complement pathway is initiated by the spontaneous hydrolysis of complement C3. The alternative complement pathway acts as an amplification loop that enhances complement activation by mediating the formation of C3 and C5 convertases. Activated CFD cleaves factor B (CFB) when the latter is complexed with complement C3b, activating the C3 convertase of the alternative pathway. The chain is Complement factor D (CFD) from Sus scrofa (Pig).